The sequence spans 624 residues: Probable potassium transport system protein Kup 1 (624 aa).

12 consecutive transmembrane segments (helical) span residues 10–30 (LALG…LYAL), 48–68 (LSLI…MIIF), 94–114 (PLFY…GMLT), 133–153 (LYPY…SLQA), 159–179 (IGYL…ILGI), 210–230 (LLLG…ADIG), 242–262 (FFAA…NLIV), 270–290 (PFFM…ATVA), 331–351 (IYVP…CLAF), 363–383 (IAVN…AISI), 388–408 (IFNV…FLGA), and 413–433 (FITG…IMYS).

It belongs to the HAK/KUP transporter (TC 2.A.72) family.

The protein localises to the cell inner membrane. The catalysed reaction is K(+)(in) + H(+)(in) = K(+)(out) + H(+)(out). Transport of potassium into the cell. Likely operates as a K(+):H(+) symporter. In Legionella pneumophila (strain Lens), this protein is Probable potassium transport system protein Kup 1.